The primary structure comprises 360 residues: MNATEVTDTTQDETVYNSYYFYESMPKPCTKEGIKAFGEVFLPPLYSLVFLLGLFGNSVVVLVLFKYKRLKSMTDVYLLNLAISDLLFVLSLPFWGYYAADQWVFGLGLCKIVSWMYLVGFYSGIFFIMLMSIDRYLAIVHAVFSLKARTLTYGVITSLITWSVAVFASLPGLLFSTCYTEHNHTYCKTQYSVNSTTWKVLSSLEINVLGLLIPLGIMLFCYSMIIRTLQHCKNEKKNRAVRMIFAVVVLFLGFWTPYNVVLFLETLVELEVLQDCTLERYLDYAIQATETLAFIHCCLNPVIYFFLGEKFRKYITQLFRTCRGPLVLCKHCDFLQVYSADMSSSSYTQSTVDHDFRDAL.

At Met1 to Glu39 the chain is on the extracellular side. The N-linked (GlcNAc...) asparagine glycan is linked to Asn2. Residues Val40–Tyr67 traverse the membrane as a helical segment. Topologically, residues Lys68–Tyr77 are cytoplasmic. The chain crosses the membrane as a helical span at residues Leu78 to Tyr98. Topologically, residues Ala99 to Lys111 are extracellular. An intrachain disulfide couples Cys110 to Cys187. The helical transmembrane segment at Ile112–Ile133 threads the bilayer. Residues Asp134 to Thr150 are Cytoplasmic-facing. The helical transmembrane segment at Leu151–Phe175 threads the bilayer. Over Ser176–Ile206 the chain is Extracellular. N-linked (GlcNAc...) asparagine glycans are attached at residues Asn183 and Asn194. Residues Asn207–Ile226 traverse the membrane as a helical segment. Over Arg227–Arg242 the chain is Cytoplasmic. Residues Met243–Leu267 traverse the membrane as a helical segment. The Extracellular segment spans residues Val268–Tyr284. The chain crosses the membrane as a helical span at residues Ala285 to Gly308. At Glu309–Leu360 the chain is on the cytoplasmic side.

The protein belongs to the G-protein coupled receptor 1 family. In terms of processing, in natural killer cells, CCL22 binding induces phosphorylation on yet undefined Ser/Thr residues, most probably by beta-adrenergic receptor kinases 1 and 2. As to expression, expressed in the thymus, macrophages and T- and B-cells.

Its subcellular location is the cell membrane. In terms of biological role, high affinity receptor for the C-C type chemokines CCL17/TARC and CCL22/MDC. The activity of this receptor is mediated by G(i) proteins which activate a phosphatidylinositol-calcium second messenger system. Could play a role in lipopolysaccharide (LPS)-induced endotoxic shock. In the CNS, could mediate hippocampal-neuron survival. This Mus musculus (Mouse) protein is C-C chemokine receptor type 4 (Ccr4).